The following is an 837-amino-acid chain: Translation initiation factor IF-2 (837 aa).

The disordered stretch occupies residues 94–252 (QRSPEEIEAE…NAHGFQSPTG (159 aa)). Basic and acidic residues predominate over residues 96 to 136 (SPEEIEAERKRELDERRAVENAARQKAEEEARVRAEEEARR). Residues 137-171 (QPAAPSAPAEAVAAPAPVAEPVREAAPVVAAAPAA) show a composition bias toward low complexity. Basic and acidic residues-rich tracts occupy residues 172 to 213 (DTRK…EKAP) and 221 to 230 (TTDEESDGFR). Basic residues predominate over residues 231–244 (RGGRGKAKLKKRNA). A tr-type G domain is found at 337–506 (PRAPVVTVMG…LLQAEVLELT (170 aa)). The G1 stretch occupies residues 346–353 (GHVDHGKT). 346–353 (GHVDHGKT) is a GTP binding site. Residues 371–375 (GITQH) are G2. The tract at residues 392-395 (DTPG) is G3. Residues 392-396 (DTPGH) and 446-449 (NKID) contribute to the GTP site. The tract at residues 446–449 (NKID) is G4. Positions 482–484 (SAK) are G5.

This sequence belongs to the TRAFAC class translation factor GTPase superfamily. Classic translation factor GTPase family. IF-2 subfamily.

It is found in the cytoplasm. Functionally, one of the essential components for the initiation of protein synthesis. Protects formylmethionyl-tRNA from spontaneous hydrolysis and promotes its binding to the 30S ribosomal subunits. Also involved in the hydrolysis of GTP during the formation of the 70S ribosomal complex. This chain is Translation initiation factor IF-2, found in Pseudomonas fluorescens (strain Pf0-1).